The primary structure comprises 273 residues: SPRY domain-containing SOCS box protein 1 (273 aa).

Tyr-31 carries the post-translational modification Phosphotyrosine; by MET. The region spanning 33 to 231 (KPTRLDLLLD…IRMRYLNGLD (199 aa)) is the B30.2/SPRY domain. In terms of domain architecture, SOCS box spans 232–273 (PEPLPLMDLCRRSVRLALGRERLGEIHTLPLPASLKAYLLYQ).

This sequence belongs to the SPSB family. Component of the probable ECS(SPSB1) E3 ubiquitin-protein ligase complex which contains CUL5, RNF7/RBX2, Elongin BC complex and SPSB1. Interacts with CUL5, RNF7, ELOB and ELOC. Directly interacts with MET tyrosine kinase domain in the presence and in the absence of HGF, however HGF treatment has a positive effect on this interaction. When phosphorylated, interacts with RASA1 without affecting its stability. Interacts (via B30.2/SPRY domain) with PAWR; this interaction is direct and occurs in association with the Elongin BC complex. Interacts with NOS2. Interacts with EPHB2.

The protein localises to the cytoplasm. It is found in the cytosol. The protein operates within protein modification; protein ubiquitination. In terms of biological role, substrate recognition component of a SCF-like ECS (Elongin BC-CUL2/5-SOCS-box protein) E3 ubiquitin-protein ligase complex which mediates the ubiquitination and subsequent proteasomal degradation of target proteins. Negatively regulates nitric oxide (NO) production and limits cellular toxicity in activated macrophages by mediating the ubiquitination and proteasomal degradation of NOS2. Acts as a bridge which links NOS2 with the ECS E3 ubiquitin ligase complex components ELOC and CUL5. This chain is SPRY domain-containing SOCS box protein 1 (SPSB1), found in Homo sapiens (Human).